A 366-amino-acid chain; its full sequence is Galactoside alpha-(1,2)-fucosyltransferase 1 (366 aa).

Residues 1-8 lie on the Cytoplasmic side of the membrane; it reads MWPLSHRH. The helical; Signal-anchor for type II membrane protein transmembrane segment at 9 to 25 threads the bilayer; the sequence is LCLAFLLVCVLSAISFF. At 26-366 the chain is on the lumenal side; sequence LHIHQDSFRH…LSPLWTLAEP (341 aa). N-linked (GlcNAc...) asparagine glycosylation is found at Asn66, Asn302, and Asn328.

Belongs to the glycosyltransferase 11 family.

The protein resides in the golgi apparatus. The protein localises to the golgi stack membrane. It carries out the reaction a beta-D-galactosyl-(1-&gt;4)-N-acetyl-beta-D-glucosaminyl derivative + GDP-beta-L-fucose = an alpha-L-Fuc-(1-&gt;2)-beta-D-Gal-(1-&gt;4)-beta-D-GlcNAc derivative + GDP + H(+). The catalysed reaction is a ganglioside GA1 + GDP-beta-L-fucose = a ganglioside Fuc-GA1 + GDP + H(+). The enzyme catalyses a beta-D-Gal-(1-&gt;3)-beta-D-GlcNAc-(1-&gt;3)-beta-D-Gal-(1-&gt;4)-beta-D-Glc-(1&lt;-&gt;1')-Cer(d18:1(4E)) + GDP-beta-L-fucose = alpha-L-fucosyl-(1-&gt;2)- beta-D-galactosyl-(1-&gt;3)-N-acetyl-beta-D-glucosaminyl-(1-&gt;3)-beta-D-galactosyl-(1-&gt;4)-beta-D-glucosyl-(1&lt;-&gt;1')-N-acylsphing-4-enine + GDP + H(+). It catalyses the reaction a neolactoside nLc4Cer(d18:1(4E)) + GDP-beta-L-fucose = a neolactoside IV(2)-alpha-Fuc-nLc4Cer(d18:1(4E)) + GDP + H(+). It carries out the reaction a ganglioside GM1 + GDP-beta-L-fucose = a ganglioside Fuc-GM1 + GDP + H(+). The catalysed reaction is beta-D-galactosyl-(1-&gt;3)-N-acetyl-D-galactosamine + GDP-beta-L-fucose = alpha-L-fucosyl-(1-&gt;2)-beta-D-galactosyl-(1-&gt;3)-N-acetyl-D-galactosamine + GDP + H(+). It functions in the pathway protein modification; protein glycosylation. Functionally, catalyzes the transfer of L-fucose, from a guanosine diphosphate-beta-L-fucose, to the terminal galactose residue of glycoconjugates through an alpha(1,2) linkage leading to H antigen synthesis that is an intermediate substrate in the synthesis of ABO blood group antigens. H antigen is essential for maturation of the glomerular layer of the main olfactory bulb, in cell migration and early cell-cell contacts during tumor associated angiogenesis. Preferentially fucosylates soluble lactose and to a lesser extent fucosylates glycolipids gangliosides GA1 and GM1a. The chain is Galactoside alpha-(1,2)-fucosyltransferase 1 from Ateles belzebuth (White-bellied spider monkey).